A 634-amino-acid chain; its full sequence is Protein IcfG (634 aa).

The HAMP domain maps to 306 to 361 (HHSTVPILDLTKASQAIAAGDLDYEININQGNRQDEIGILGNSFIYMKNQIKTLIA). In terms of domain architecture, PPM-type phosphatase spans 385 to 633 (PISLPDLQQW…DDITMIAVYR (249 aa)).

Functionally, involved in cross-regulation of inorganic carbon and glucose metabolisms. The polypeptide is Protein IcfG (icfG) (Synechocystis sp. (strain ATCC 27184 / PCC 6803 / Kazusa)).